A 285-amino-acid polypeptide reads, in one-letter code: 1,4-dihydroxy-2-naphthoyl-CoA synthase (285 aa).

Substrate contacts are provided by residues Arg-45, 84-89 (SGGDQK), Tyr-97, 129-133 (YSIGG), Thr-155, Ser-161, Tyr-258, and Lys-273. 154 to 156 (QTG) contacts hydrogencarbonate.

The protein belongs to the enoyl-CoA hydratase/isomerase family. MenB subfamily. As to quaternary structure, homohexamer. Dimer of a homotrimer. The cofactor is hydrogencarbonate.

The enzyme catalyses 2-succinylbenzoyl-CoA + H(+) = 1,4-dihydroxy-2-naphthoyl-CoA + H2O. It functions in the pathway quinol/quinone metabolism; 1,4-dihydroxy-2-naphthoate biosynthesis; 1,4-dihydroxy-2-naphthoate from chorismate: step 6/7. The protein operates within quinol/quinone metabolism; menaquinone biosynthesis. With respect to regulation, inhibited by sulfite and nitrate. In terms of biological role, converts o-succinylbenzoyl-CoA (OSB-CoA) to 1,4-dihydroxy-2-naphthoyl-CoA (DHNA-CoA). This Escherichia coli (strain K12) protein is 1,4-dihydroxy-2-naphthoyl-CoA synthase.